Consider the following 627-residue polypeptide: Carene synthase, chloroplastic (627 aa).

The N-terminal 36 residues, 1-36 (MSVISIMPLASKPCLNKSFISSTHEPKALRRPISTV), are a transit peptide targeting the chloroplast. Positions 378, 382, and 530 each coordinate Mg(2+). Positions 378 to 382 (DDMYD) match the DDXXD motif motif.

This sequence belongs to the terpene synthase family. Tpsd subfamily. It depends on Mg(2+) as a cofactor. The cofactor is Mn(2+).

Its subcellular location is the plastid. The protein localises to the chloroplast. The enzyme catalyses (2E)-geranyl diphosphate = (+)-car-3-ene + diphosphate. The protein operates within terpene metabolism; oleoresin biosynthesis. Its function is as follows. Terpene synthase (TPS) involved in defensive oleoresin formation in conifers in response to insect attack or other injury. In Picea glauca (White spruce), this protein is Carene synthase, chloroplastic (3CAR).